The chain runs to 334 residues: Mitochondrial ribosome-associated GTPase 1 (334 aa).

The region spanning 36–209 is the CP-type G domain; that stretch reads AKGLKKMQSS…LLDTPGVLAP (174 aa). GTP-binding positions include 83–86, 153–158, and Gly-205; these read NKMD and NVGKSS.

The protein belongs to the TRAFAC class YlqF/YawG GTPase family. MTG1 subfamily. In terms of assembly, associates with the mitochondrial ribosome large subunit; the association occurs in a GTP-dependent manner.

The protein resides in the mitochondrion inner membrane. In terms of biological role, plays a role in the regulation of the mitochondrial ribosome assembly and of translational activity. Displays mitochondrial GTPase activity. This Homo sapiens (Human) protein is Mitochondrial ribosome-associated GTPase 1 (MTG1).